A 516-amino-acid chain; its full sequence is D-alanine--D-alanyl carrier protein ligase (516 aa).

156–157 lines the ATP pocket; sequence TS. Asp-203 is a binding site for D-alanine. Residue 298–303 participates in ATP binding; that stretch reads NAYGPT. Val-307 serves as a coordination point for D-alanine. Residues Asp-389, 401-404, and Lys-503 contribute to the ATP site; that span reads YGGR. Lys-503 provides a ligand contact to D-alanine.

This sequence belongs to the ATP-dependent AMP-binding enzyme family. DltA subfamily.

The protein localises to the cytoplasm. The catalysed reaction is holo-[D-alanyl-carrier protein] + D-alanine + ATP = D-alanyl-[D-alanyl-carrier protein] + AMP + diphosphate. It functions in the pathway cell wall biogenesis; lipoteichoic acid biosynthesis. Functionally, catalyzes the first step in the D-alanylation of lipoteichoic acid (LTA), the activation of D-alanine and its transfer onto the D-alanyl carrier protein (Dcp) DltC. In an ATP-dependent two-step reaction, forms a high energy D-alanyl-AMP intermediate, followed by transfer of the D-alanyl residue as a thiol ester to the phosphopantheinyl prosthetic group of the Dcp. D-alanylation of LTA plays an important role in modulating the properties of the cell wall in Gram-positive bacteria, influencing the net charge of the cell wall. The protein is D-alanine--D-alanyl carrier protein ligase of Streptococcus pneumoniae serotype 4 (strain ATCC BAA-334 / TIGR4).